Here is a 445-residue protein sequence, read N- to C-terminus: Enolase 1 (445 aa).

Substrate is bound by residues histidine 164 and glutamate 173. Glutamate 216 acts as the Proton donor in catalysis. Residues aspartate 251, glutamate 301, and aspartate 328 each coordinate Mg(2+). Residues glutamate 301 and aspartate 328 each contribute to the substrate site. Lysine 353 (proton acceptor) is an active-site residue. Residues 380–383 (SHRS) and lysine 404 contribute to the substrate site.

It belongs to the enolase family. Homodimer. The cofactor is Mg(2+).

The protein localises to the cytoplasm. It catalyses the reaction (2R)-2-phosphoglycerate = phosphoenolpyruvate + H2O. It participates in carbohydrate degradation; glycolysis; pyruvate from D-glyceraldehyde 3-phosphate: step 4/5. This chain is Enolase 1 (ENO1), found in Hevea brasiliensis (Para rubber tree).